The chain runs to 373 residues: NAD-dependent protein deacetylase SIR2rp1 (373 aa).

Residues 12 to 349 enclose the Deacetylase sirtuin-type domain; sequence HALGEPTVEG…LKLAECLGLR (338 aa). Residues 39–59 and 124–127 each bind NAD(+); these read GAGA…TGIY and QNID. The active-site Proton acceptor is H144. Residues C152, C155, C176, and C179 each coordinate Zn(2+). NAD(+)-binding positions include 216–218 and 241–243; these read GTS and NRE. Residues 263–313 form a disordered region; it reads DAVAKEGRSSSSQSRSPSASARREEGGTEDGSSSPNEEVEDASTSSSSDGY. Residues 271–282 are compositionally biased toward low complexity; the sequence is SSSSQSRSPSAS. C335 contributes to the NAD(+) binding site.

The protein belongs to the sirtuin family. Class I subfamily. It depends on Zn(2+) as a cofactor.

Its subcellular location is the nucleus. It catalyses the reaction N(6)-acetyl-L-lysyl-[protein] + NAD(+) + H2O = 2''-O-acetyl-ADP-D-ribose + nicotinamide + L-lysyl-[protein]. NAD-dependent deacetylase, which probably acts as a regulator of gene expression believed to help form modified chromatin structures on the genes it regulates. In Leishmania major, this protein is NAD-dependent protein deacetylase SIR2rp1 (SIR2rp1).